Here is a 1240-residue protein sequence, read N- to C-terminus: ATP-dependent helicase/nuclease subunit A (1240 aa).

A UvrD-like helicase ATP-binding domain is found at 12 to 485; sequence SQWTDDQWKA…IDLAKNFRSR (474 aa). 33–40 provides a ligand contact to ATP; that stretch reads AAAGSGKT. One can recognise a UvrD-like helicase C-terminal domain in the interval 497 to 804; it reads KQIMGEEVGE…RIMTIHKSKG (308 aa).

Belongs to the helicase family. AddA subfamily. As to quaternary structure, heterodimer of AddA and AddB/RexB. It depends on Mg(2+) as a cofactor.

It carries out the reaction Couples ATP hydrolysis with the unwinding of duplex DNA by translocating in the 3'-5' direction.. It catalyses the reaction ATP + H2O = ADP + phosphate + H(+). In terms of biological role, the heterodimer acts as both an ATP-dependent DNA helicase and an ATP-dependent, dual-direction single-stranded exonuclease. Recognizes the chi site generating a DNA molecule suitable for the initiation of homologous recombination. The AddA nuclease domain is required for chi fragment generation; this subunit has the helicase and 3' -&gt; 5' nuclease activities. The polypeptide is ATP-dependent helicase/nuclease subunit A (Bacillus cereus (strain AH820)).